The chain runs to 31 residues: Cytochrome b6-f complex subunit 6 (31 aa).

Residues isoleucine 4–serine 26 traverse the membrane as a helical segment.

The protein belongs to the PetL family. In terms of assembly, the 4 large subunits of the cytochrome b6-f complex are cytochrome b6, subunit IV (17 kDa polypeptide, PetD), cytochrome f and the Rieske protein, while the 4 small subunits are PetG, PetL, PetM and PetN. The complex functions as a dimer.

It localises to the plastid. Its subcellular location is the chloroplast thylakoid membrane. Functionally, component of the cytochrome b6-f complex, which mediates electron transfer between photosystem II (PSII) and photosystem I (PSI), cyclic electron flow around PSI, and state transitions. PetL is important for photoautotrophic growth as well as for electron transfer efficiency and stability of the cytochrome b6-f complex. The polypeptide is Cytochrome b6-f complex subunit 6 (Lactuca sativa (Garden lettuce)).